Reading from the N-terminus, the 137-residue chain is Structural protein A137R (137 aa).

Belongs to the asfivirus A137R family. In terms of assembly, interacts with host TBK1.

The protein resides in the virion. It is found in the host cytoplasm. Plays a role in the inhibition of the host innate immune response. Mechanistically, promotes the autophagy-mediated lysosomal degradation of host TBK1 and affects IRF3 nuclear translocation to block type I IFN production. In Ornithodoros (relapsing fever ticks), this protein is Structural protein A137R.